A 253-amino-acid polypeptide reads, in one-letter code: Ipsdienol dehydrogenase (253 aa).

NAD(+)-binding positions include 12-40 (VTGGGSGLGEATAKLLLTEGARVTIFSRN) and aspartate 63. Serine 149 serves as a coordination point for substrate. Tyrosine 162 acts as the Proton acceptor in catalysis. Residue lysine 166 coordinates NAD(+).

The protein belongs to the short-chain dehydrogenases/reductases (SDR) family. In terms of tissue distribution, specifically expressed in male midguts. Expressed at higher level in the anterior midgut of fed males.

The protein resides in the cytoplasm. It localises to the cytosol. It catalyses the reaction (4R)-ipsdienol + NADP(+) = ipsdienone + NADPH + H(+). The catalysed reaction is (4R)-ipsdienol + NAD(+) = ipsdienone + NADH + H(+). Its function is as follows. Catalyzes the oxidation of racemic ipsdienol and (4R)-(-)-ipsdienol to form ipsdienone (2-methyl-6-methylene-2,7-octadien-4-one), an intermediate in the biosynthesis of pheromonal ipsdienol in male pine engraver beetles. In contrast, (4S)-(+)-ipsdienol is not a substrate. The chain is Ipsdienol dehydrogenase from Ips pini (Pine engraver beetle).